A 987-amino-acid chain; its full sequence is Collagen alpha-1(I) chain (987 aa).

Positions 1–21 (SVPGPMGPSGPRGLPGPPGPG) are enriched in pro residues. The tract at residues 1–987 (SVPGPMGPSG…PGPPGPPGPP (987 aa)) is disordered. A 4-hydroxyproline mark is found at proline 15, proline 18, proline 20, proline 29, proline 32, proline 35, proline 50, proline 65, proline 71, proline 80, and proline 86. The segment covering 23–41 (QGFQGPPGEPGEPGSSGPM) has biased composition (low complexity). Basic and acidic residues predominate over residues 53-67 (NGDDGEAGKPGRPGE). Lysine 89 is subject to 5-hydroxylysine; alternate. Lysine 89 carries an O-linked (Gal...) hydroxylysine; alternate glycan. At serine 95 the chain carries Phosphoserine. Over residues 103–119 (DAGPAGPKGEPGSPGEN) the composition is skewed to low complexity. 4-hydroxyproline is present on residues proline 113, proline 116, proline 122, proline 131, proline 137, proline 158, proline 167, proline 170, proline 197, proline 200, proline 212, proline 218, proline 227, proline 233, proline 236, and proline 251. A compositionally biased stretch (low complexity) spans 137–155 (PGASGPAGARGNDGAAGAA). Residues 157–169 (PPGPTGPAGPPGF) show a composition bias toward pro residues. The span at 203–253 (AGAAGPAGNPGADGQPGAKGANGAPGIAGAPGFPGARGPSGPQGPSGAPGP) shows a compositional bias: low complexity. Position 254 is a 5-hydroxylysine (lysine 254). Residues proline 260, proline 263, proline 275, proline 284, proline 299, proline 305, proline 314, and proline 320 each carry the 4-hydroxyproline modification. Residues 309–318 (GERGGPGSRG) are compositionally biased toward gly residues. Lysine 329 is subject to 5-hydroxylysine. 4-hydroxyproline is present on residues proline 338, proline 347, proline 353, proline 359, proline 368, proline 371, proline 380, proline 389, proline 395, proline 407, proline 416, proline 425, proline 428, proline 446, proline 468, proline 474, proline 480, proline 486, proline 492, proline 504, proline 513, proline 526, proline 532, and proline 541. Positions 362–388 (KGLTGSPGSPGPDGKTGPPGPAGQDGR) are enriched in low complexity. Over residues 397–416 (ARGQAGVMGFPGPKGAAGEP) the composition is skewed to low complexity. Residues 458–483 (QGPAPGFQGLPGPAGPPGEAGKPGEQ) are compositionally biased toward low complexity. Position 553 is a 5-hydroxylysine (lysine 553). Proline 559, proline 574, and proline 580 each carry 4-hydroxyproline. Low complexity predominate over residues 586–600 (SGPSGPAGPTGARGA). Phosphoserine is present on serine 589. A 4-hydroxyproline mark is found at proline 601, proline 607, proline 610, proline 619, proline 625, proline 643, proline 652, and proline 661. Positions 613 to 640 (AGFAGPPGADGQPGAKGEPGDAGAKGDA) are enriched in low complexity. The span at 642 to 654 (PPGPAGPTGPPGP) shows a compositional bias: pro residues. 5-hydroxylysine is present on lysine 664. The span at 669–685 (SAGPPGATGFPGAAGRV) shows a compositional bias: low complexity. A 4-hydroxyproline mark is found at proline 673 and proline 679. Proline 687 bears the 3-hydroxyproline mark. 4-hydroxyproline is present on residues proline 688, proline 697, proline 700, proline 721, proline 730, proline 738, proline 747, proline 765, proline 774, proline 777, proline 783, proline 798, proline 804, proline 810, proline 819, and proline 825. The span at 714–723 (ETGPAGRPGE) shows a compositional bias: low complexity. The segment covering 735-747 (KGSPGADGPAGAP) has biased composition (low complexity). Positions 797-807 (PPGPMGPPGLA) are enriched in pro residues. Residues 809-824 (PPGESGREGSPGAEGS) show a composition bias toward low complexity. Lysine 834 carries the 5-hydroxylysine modification. A compositionally biased stretch (pro residues) spans 843–858 (AGPPGAPGAPGAPGPV). Proline 846, proline 849, and proline 852 each carry 4-hydroxyproline. A compositionally biased stretch (low complexity) spans 879–893 (AGPAGARGPAGPQGP). Over residues 894–905 (RGDKGETGEQGD) the composition is skewed to basic and acidic residues. 5-hydroxylysine is present on lysine 897. 4 positions are modified to 4-hydroxyproline: proline 918, proline 921, proline 939, and proline 954. Positions 921-954 (PGEQGPSGASGPAGPRGPPGSAGSPGKDGLNGLP) are enriched in low complexity. 3-hydroxyproline is present on proline 959. 4-hydroxyproline is present on proline 960. The segment covering 972–987 (VGPPGPPGPPGPPGPP) has biased composition (pro residues). 3-hydroxyproline is present on proline 974. A 4-hydroxyproline modification is found at proline 975. Proline 977 carries the post-translational modification 3-hydroxyproline. Proline 978 bears the 4-hydroxyproline mark. Proline 980 is modified (3-hydroxyproline). Residues proline 981, proline 984, and proline 987 each carry the 4-hydroxyproline modification.

It belongs to the fibrillar collagen family. In terms of assembly, trimers of one alpha 2(I) and two alpha 1(I) chains. In terms of processing, contains mostly 4-hydroxyproline. Proline residues at the third position of the tripeptide repeating unit (G-X-Y) are hydroxylated in some or all of the chains. Contains 3-hydroxyproline at a few sites. This modification occurs on the first proline residue in the sequence motif Gly-Pro-Hyp, where Hyp is 4-hydroxyproline. Post-translationally, lysine residues at the third position of the tripeptide repeating unit (G-X-Y) are 5-hydroxylated in some or all of the chains. In terms of processing, O-glycosylated on hydroxylated lysine residues. The O-linked glycan consists of a Glc-Gal disaccharide. As to expression, expressed in bones.

It is found in the secreted. The protein localises to the extracellular space. Its subcellular location is the extracellular matrix. In terms of biological role, type I collagen is a member of group I collagen (fibrillar forming collagen). The polypeptide is Collagen alpha-1(I) chain (Glossotherium robustum (Ground sloth)).